Consider the following 61-residue polypeptide: DNA-binding protein 7a (61 aa).

Residues 37 to 61 form a disordered region; that stretch reads NGKTGRGAVSEKDAPKELLEKLEKK. Basic and acidic residues predominate over residues 45 to 61; the sequence is VSEKDAPKELLEKLEKK.

This sequence belongs to the 7 kDa DNA-binding/endoribonuclease P2 family. Monomer.

The protein localises to the cytoplasm. Functionally, can constrain negative DNA supercoils. May be involved in maintaining the integrity of the genome at high temperature. This is DNA-binding protein 7a from Acidianus hospitalis (strain W1).